The following is a 327-amino-acid chain: Undecaprenyl-phosphate 4-deoxy-4-formamido-L-arabinose transferase (327 aa).

Over 1–235 (MFDAAPIKKV…TCLTTTPLRL (235 aa)) the chain is Cytoplasmic. The helical transmembrane segment at 236–256 (LSLLGSVIAIGGFSLSVLLIV) threads the bilayer. Residues 257-269 (LRLALGPQWAAEG) lie on the Periplasmic side of the membrane. The helical transmembrane segment at 270–290 (VFMLFAVLFTFIGAQFIGMGL) threads the bilayer. The Cytoplasmic segment spans residues 291-327 (LGEYIGRIYNDVRARPRYFVQQVIYPESTSFTEESHQ).

The protein belongs to the glycosyltransferase 2 family.

It localises to the cell inner membrane. The catalysed reaction is UDP-4-deoxy-4-formamido-beta-L-arabinose + di-trans,octa-cis-undecaprenyl phosphate = 4-deoxy-4-formamido-alpha-L-arabinopyranosyl di-trans,octa-cis-undecaprenyl phosphate + UDP. The protein operates within glycolipid biosynthesis; 4-amino-4-deoxy-alpha-L-arabinose undecaprenyl phosphate biosynthesis; 4-amino-4-deoxy-alpha-L-arabinose undecaprenyl phosphate from UDP-4-deoxy-4-formamido-beta-L-arabinose and undecaprenyl phosphate: step 1/2. It participates in bacterial outer membrane biogenesis; lipopolysaccharide biosynthesis. In terms of biological role, catalyzes the transfer of 4-deoxy-4-formamido-L-arabinose from UDP to undecaprenyl phosphate. The modified arabinose is attached to lipid A and is required for resistance to polymyxin and cationic antimicrobial peptides. The chain is Undecaprenyl-phosphate 4-deoxy-4-formamido-L-arabinose transferase from Salmonella paratyphi A (strain ATCC 9150 / SARB42).